The chain runs to 333 residues: Flap endonuclease 1 (333 aa).

The interval 1-99 is N-domain; sequence MGVALREVLT…ETIESRREVR (99 aa). D28, D81, E153, E155, D174, D176, and D235 together coordinate Mg(2+). Residues 117–256 are I-domain; that stretch reads EAYKQARASS…TALKIVKKDG (140 aa). The segment at 325-333 is interaction with PCNA; it reads GQKTLDRWF.

The protein belongs to the XPG/RAD2 endonuclease family. FEN1 subfamily. Interacts with PCNA. PCNA stimulates the nuclease activity without altering cleavage specificity. Mg(2+) serves as cofactor.

Structure-specific nuclease with 5'-flap endonuclease and 5'-3' exonuclease activities involved in DNA replication and repair. During DNA replication, cleaves the 5'-overhanging flap structure that is generated by displacement synthesis when DNA polymerase encounters the 5'-end of a downstream Okazaki fragment. Binds the unpaired 3'-DNA end and kinks the DNA to facilitate 5' cleavage specificity. Cleaves one nucleotide into the double-stranded DNA from the junction in flap DNA, leaving a nick for ligation. Also involved in the base excision repair (BER) pathway. Acts as a genome stabilization factor that prevents flaps from equilibrating into structures that lead to duplications and deletions. Also possesses 5'-3' exonuclease activity on nicked or gapped double-stranded DNA. This is Flap endonuclease 1 from Methanosphaerula palustris (strain ATCC BAA-1556 / DSM 19958 / E1-9c).